The sequence spans 217 residues: 3,4-dihydroxy-2-butanone 4-phosphate synthase (217 aa).

Residues 37-38 (RE), aspartate 42, 150-154 (RGGHT), and glutamate 174 each bind D-ribulose 5-phosphate. Mg(2+) is bound at residue glutamate 38. Histidine 153 contacts Mg(2+).

It belongs to the DHBP synthase family. Homodimer. It depends on Mg(2+) as a cofactor. Requires Mn(2+) as cofactor.

The catalysed reaction is D-ribulose 5-phosphate = (2S)-2-hydroxy-3-oxobutyl phosphate + formate + H(+). The protein operates within cofactor biosynthesis; riboflavin biosynthesis; 2-hydroxy-3-oxobutyl phosphate from D-ribulose 5-phosphate: step 1/1. Its function is as follows. Catalyzes the conversion of D-ribulose 5-phosphate to formate and 3,4-dihydroxy-2-butanone 4-phosphate. This is 3,4-dihydroxy-2-butanone 4-phosphate synthase from Escherichia coli O127:H6 (strain E2348/69 / EPEC).